The following is a 549-amino-acid chain: Ankyrin repeat domain-containing protein SOWAHA (549 aa).

Residues 1–17 (MALAAAAAAAAAGVSQA) form the signal peptide. Disordered stretches follow at residues 82–219 (KPRP…PCML) and 235–256 (EEPG…PLLL). Over residues 203-216 (PGPGAAKGPPQQKP) the composition is skewed to low complexity. Over residues 235–248 (EEPGLRRQLSEEPS) the composition is skewed to basic and acidic residues. S260 carries the post-translational modification Phosphoserine. 2 ANK repeats span residues 345–374 (SGFT…RSGA) and 384–414 (GGYT…QVHV). The interval 513–549 (PRKKTKIRGGLPAFSEISRRPTPGPLAGLVPSLPPTT) is disordered.

This sequence belongs to the SOWAH family.

This chain is Ankyrin repeat domain-containing protein SOWAHA (SOWAHA), found in Homo sapiens (Human).